The chain runs to 258 residues: Short-chain dehydrogenase/reductase aba4 (258 aa).

NADP(+)-binding residues include Ile20, Asp66, and Lys130. Residues Ser146 and Tyr160 each act as proton donor in the active site. Residues Tyr160, Lys164, Ile193, and Thr195 each contribute to the NADP(+) site. Catalysis depends on Lys164, which acts as the Lowers pKa of active site Tyr.

It belongs to the short-chain dehydrogenases/reductases (SDR) family.

The protein operates within hormone biosynthesis. Functionally, short-chain dehydrogenase/reductase; part of the gene cluster that mediates the biosynthesis of abscisic acid (ABA), a phytohormone that acts antagonistically toward salicylic acid (SA), jasmonic acid (JA) and ethylene (ETH) signaling, to impede plant defense responses. The first step of the pathway catalyzes the reaction from farnesyl diphosphate to alpha-ionylideneethane performed by the alpha-ionylideneethane synthase aba3 via a three-step reaction mechanism involving 2 neutral intermediates, beta-farnesene and allofarnesene. The cytochrome P450 monooxygenase aba1 might then be involved in the conversion of alpha-ionylideneethane to alpha-ionylideneacetic acid. Alpha-ionylideneacetic acid is further converted to abscisic acid in 2 steps involving the cytochrome P450 monooxygenase aba2 and the short-chain dehydrogenase/reductase aba4, via the intermediates 1'-deoxy-ABA or 1',4'-trans-diol-ABA, depending on the order of action of these 2 enzymes. Aba2 is responsible for the hydroxylation of carbon atom C-1' and aba4 might be involved in the oxidation of the C-4' carbon atom. This is Short-chain dehydrogenase/reductase aba4 from Botryotinia fuckeliana (strain B05.10) (Noble rot fungus).